We begin with the raw amino-acid sequence, 556 residues long: Large cysteine-rich periplasmic protein OmcB (556 aa).

An N-terminal signal peptide occupies residues 1–22; it reads MSKLIRRVVTVLALTSMASCFA. Positions 23–40 are excised as a propeptide; it reads SGGIEAAVAESLITKIVA.

Part of a disulfide cross-linked outer membrane complex (COMC) composed of the major outer membrane porin (MOMP), the small cysteine-rich protein (OmcA) and the large cysteine-rich periplasmic protein (OmcB).

It localises to the periplasm. Functionally, in elementary bodies (EBs, the infectious stage, which is able to survive outside the host cell) provides the structural integrity of the outer envelope through disulfide cross-links with the small cysteine-rich protein and the major outer membrane porin. It has been described in publications as the Sarkosyl-insoluble COMC (Chlamydia outer membrane complex), and serves as the functional equivalent of peptidoglycan. This is Large cysteine-rich periplasmic protein OmcB (omcB) from Chlamydia pneumoniae (Chlamydophila pneumoniae).